A 396-amino-acid polypeptide reads, in one-letter code: MASHIRGNLTEEQLKRIEANRKRALERLQQKKKKDAGEHVPSSTPKSTSTTTTKETGSYSPTKTLSQIVNSDSVQVSSKFVEIETDGSVKKRRVLTEEQRQKIEQNRLRAIEIQKNLKQRENQKDDSTTSSKPVDNIRLNQNRPDSVVSSTKKFQPPPIRKQDYIEFDFATMKDTKGGFLQDEKTNTQGADEQTLQDWKNKQRELQKIRELPPPIDLQNIPRCRECQSMEVDANLMTNFNVRACRKCIKALPEKYSLLTKTECKEDYLLTEPELQDTTLLPRIEKPNPHGYSRMQLFVRFQVEEFAWKKWGGPEELDKEWERREENKVKRKEKKYHDQLREMRKRTRAEEYTRKLRDGKSLGERHVHDWSSPVNIDKHTIKRRCIDCGIETEEVVI.

The span at 20 to 29 shows a compositional bias: basic and acidic residues; it reads NRKRALERLQ. 2 disordered regions span residues 20-101 and 116-156; these read NRKR…EQRQ and NLKQ…KFQP. Over residues 41 to 62 the composition is skewed to low complexity; sequence PSSTPKSTSTTTTKETGSYSPT. Residues 63–78 are compositionally biased toward polar residues; sequence KTLSQIVNSDSVQVSS. The span at 118–127 shows a compositional bias: basic and acidic residues; it reads KQRENQKDDS. Residues 128-153 are compositionally biased toward polar residues; the sequence is TTSSKPVDNIRLNQNRPDSVVSSTKK. The Zn(2+) site is built by cysteine 223, cysteine 226, cysteine 244, and cysteine 247. The segment at 223–247 is a zinc-finger region; that stretch reads CRECQSMEVDANLMTNFNVRACRKC.

This sequence belongs to the XPA family.

The protein localises to the nucleus. Involved in DNA excision repair. The chain is DNA repair protein RAD14 (RAD14) from Candida albicans (strain SC5314 / ATCC MYA-2876) (Yeast).